The following is an 879-amino-acid chain: DNA methyltransferase A (879 aa).

Belongs to the methyltransferase superfamily.

It catalyses the reaction a 2'-deoxyadenosine in DNA + S-adenosyl-L-methionine = an N(6)-methyl-2'-deoxyadenosine in DNA + S-adenosyl-L-homocysteine + H(+). Its function is as follows. Recognizes the double-stranded sequence 5'-GACGAG-3' and methylates A-5, yielding m6A. m6A methylation functions as a transcriptional modifier, promoting transcription of a number of genes (at least scpA, hbs, rnhC, yumC and zapA). One studied mechanism is via transcriptional repressor ScoC (also called hpr) which binds to non-methylated scpA promoter; when the m6A target is methylated ScoC no longer binds and scpA transcription is up-regulated. Other mechanisms for gene expression regulation probably exist. Binds DNA with and without the target sequence. Although it resembles a restriction-modification system, it does not have detectable endonuclease activity under tested conditions. A gamma subtype methylase. The chain is DNA methyltransferase A from Bacillus subtilis (strain 168).